Reading from the N-terminus, the 100-residue chain is uncharacterized protein (100 aa).

This is an uncharacterized protein from Acidianus filamentous virus 2 (isolate Italy/Pozzuoli) (AFV-2).